We begin with the raw amino-acid sequence, 186 residues long: Large ribosomal subunit protein uL5 (186 aa).

It belongs to the universal ribosomal protein uL5 family. Part of the 50S ribosomal subunit; contacts the 5S rRNA and probably tRNA. Forms a bridge to the 30S subunit in the 70S ribosome.

Functionally, this is one of the proteins that bind and probably mediate the attachment of the 5S RNA into the large ribosomal subunit, where it forms part of the central protuberance. In the 70S ribosome it contacts protein S13 of the 30S subunit (bridge B1b), connecting the 2 subunits; this bridge is implicated in subunit movement. May contact the P site tRNA; the 5S rRNA and some of its associated proteins might help stabilize positioning of ribosome-bound tRNAs. This Methanopyrus kandleri (strain AV19 / DSM 6324 / JCM 9639 / NBRC 100938) protein is Large ribosomal subunit protein uL5.